We begin with the raw amino-acid sequence, 273 residues long: Tetraspanin-8 (273 aa).

At Met1 to Asn7 the chain is on the cytoplasmic side. Residues Leu8–Ile28 traverse the membrane as a helical segment. Over Trp29–Pro45 the chain is Extracellular. A helical membrane pass occupies residues Val46–Cys66. The Cytoplasmic portion of the chain corresponds to Arg67–Tyr75. Residues Leu76–Val96 traverse the membrane as a helical segment. The Extracellular segment spans residues Thr97 to Ala235. N-linked (GlcNAc...) asparagine glycosylation occurs at Asn192. The helical transmembrane segment at Ile236 to Phe256 threads the bilayer. Residues Arg257–Pro273 are Cytoplasmic-facing.

It belongs to the tetraspanin (TM4SF) family.

The protein resides in the membrane. In terms of biological role, may be involved in the regulation of cell differentiation. The polypeptide is Tetraspanin-8 (TET8) (Arabidopsis thaliana (Mouse-ear cress)).